A 359-amino-acid polypeptide reads, in one-letter code: Pyruvate dehydrogenase E1 component subunit beta, mitochondrial (359 aa).

The transit peptide at 1-30 (MAVVAVLVRKPLEQVSGLLRRRFHRTAPAA) directs the protein to the mitochondrion. Tyrosine 67 carries the phosphotyrosine modification. Glutamate 89 provides a ligand contact to thiamine diphosphate. K(+) is bound by residues isoleucine 142, alanine 190, isoleucine 191, aspartate 193, and asparagine 195. An N6-acetyllysine modification is found at lysine 354.

In terms of assembly, heterotetramer of two PDHA1 and two PDHB subunits. The heterotetramer interacts with DLAT, and is part of the multimeric pyruvate dehydrogenase complex that contains multiple copies of pyruvate dehydrogenase (E1), dihydrolipoamide acetyltransferase (DLAT, E2) and lipoamide dehydrogenase (DLD, E3). These subunits are bound to an inner core composed of about 48 DLAT and 12 PDHX molecules. Interacts with DLAT. Thiamine diphosphate is required as a cofactor.

It localises to the mitochondrion matrix. It carries out the reaction N(6)-[(R)-lipoyl]-L-lysyl-[protein] + pyruvate + H(+) = N(6)-[(R)-S(8)-acetyldihydrolipoyl]-L-lysyl-[protein] + CO2. In terms of biological role, the pyruvate dehydrogenase complex catalyzes the overall conversion of pyruvate to acetyl-CoA and CO(2), and thereby links the glycolytic pathway to the tricarboxylic cycle. The sequence is that of Pyruvate dehydrogenase E1 component subunit beta, mitochondrial (PDHB) from Bos taurus (Bovine).